Reading from the N-terminus, the 250-residue chain is Low affinity immunoglobulin gamma Fc region receptor III-A (250 aa).

Residues 1 to 16 (MWQLLPPAALLLLVSA) form the signal peptide. The Extracellular portion of the chain corresponds to 17 to 208 (DTQTADPSKA…VSSFFLPWHQ (192 aa)). 2 Ig-like C2-type domains span residues 23–105 (PSKA…LEVH) and 99–189 (PVKL…VQIT). Cystine bridges form between Cys-47–Cys-89 and Cys-128–Cys-172. N-linked (GlcNAc...) asparagine glycans are attached at residues Asn-56 and Asn-63. N-linked (GlcNAc...) asparagine glycosylation occurs at Asn-180. The chain crosses the membrane as a helical span at residues 209-225 (ITFCLVMGVLFAVDTGL). The Cytoplasmic segment spans residues 226 to 250 (YFSVRRHLQSSEEWRDGKVTWSKGP).

As to quaternary structure, forms a heterooligomeric complex with ITAM-containing signaling subunits FCER1G. Interacts (via transmembrane domain) with signaling subunits; this interaction is a prerequisite for receptor complex expression on the cell surface and intracellular signal transduction. Binds the Fc region of antigen-complexed IgG. In terms of tissue distribution, expressed in gamma-delta T cells.

The protein resides in the cell membrane. Its function is as follows. Receptor for the invariable Fc fragment of immunoglobulin gamma (IgG). Optimally activated upon binding of clustered antigen-IgG complexes displayed on cell surfaces, triggers lysis of antibody-coated cells, a process known as antibody-dependent cellular cytotoxicity (ADCC). Does not bind free monomeric IgG, thus avoiding inappropriate effector cell activation in the absence of antigenic trigger. Mediates IgG effector functions on natural killer (NK) cells. Binds antigen-IgG complexes generated upon infection and triggers NK cell-dependent cytokine production and degranulation to limit viral load and propagation. Fc-binding subunit that associates with FCER1G adapters to form functional signaling complexes. Following the engagement of antigen-IgG complexes, triggers phosphorylation of immunoreceptor tyrosine-based activation motif (ITAM)-containing adapter with subsequent activation of phosphatidylinositol 3-kinase signaling and sustained elevation of intracellular calcium that ultimately drive NK cell activation. Mediates enhanced ADCC in response to afucosylated IgGs. The polypeptide is Low affinity immunoglobulin gamma Fc region receptor III-A (Bos taurus (Bovine)).